A 179-amino-acid chain; its full sequence is Transcription factor E (179 aa).

Positions 1–102 (MAKKKVKYTF…YWRFDSRKAA (102 aa)) constitute an HTH TFE/IIEalpha-type domain.

It belongs to the TFE family. As to quaternary structure, monomer. Interaction with RNA polymerase subunits RpoF and RpoE is necessary for Tfe stimulatory transcription activity. Able to interact with Tbp and RNA polymerase in the absence of DNA promoter. Interacts both with the preinitiation and elongation complexes.

Transcription factor that plays a role in the activation of archaeal genes transcribed by RNA polymerase. Facilitates transcription initiation by enhancing TATA-box recognition by TATA-box-binding protein (Tbp), and transcription factor B (Tfb) and RNA polymerase recruitment. Not absolutely required for transcription in vitro, but particularly important in cases where Tbp or Tfb function is not optimal. It dynamically alters the nucleic acid-binding properties of RNA polymerases by stabilizing the initiation complex and destabilizing elongation complexes. Seems to translocate with the RNA polymerase following initiation and acts by binding to the non template strand of the transcription bubble in elongation complexes. This chain is Transcription factor E, found in Methanosphaera stadtmanae (strain ATCC 43021 / DSM 3091 / JCM 11832 / MCB-3).